The following is a 129-amino-acid chain: Ribulose bisphosphate carboxylase small subunit (129 aa).

Residues 109 to 129 (LRMTRTESNGRSQHYMWETQR) form a disordered region.

It belongs to the RuBisCO small chain family. In terms of assembly, heterohexadecamer of 8 large and 8 small subunits.

Its function is as follows. RuBisCO catalyzes two reactions: the carboxylation of D-ribulose 1,5-bisphosphate, the primary event in carbon dioxide fixation, as well as the oxidative fragmentation of the pentose substrate. Both reactions occur simultaneously and in competition at the same active site. Although the small subunit is not catalytic it is essential for maximal activity. This Rhizobium meliloti (strain 1021) (Ensifer meliloti) protein is Ribulose bisphosphate carboxylase small subunit.